The following is a 306-amino-acid chain: Protein SULFUR DEFICIENCY-INDUCED 1 (306 aa).

TPR repeat units lie at residues 1-22 (MERSLKKTKNNYNNSIKSNLMK), 71-104 (DSALKDMAVVMKQLDRSEEAIEAIKSFRPRCSKN), 107-140 (DSLDNVLIDLYKKCGRMEEQVELLKRKLRQIYQG), 167-200 (SRLLGNLGWAYMQQAKYLSAEAVYRKAQMVEPDA), and 202-233 (KSCNLAMCLIKQGRFEEGRLVLDDVLEYRVLG). Residues 72–139 (SALKDMAVVM…LKRKLRQIYQ (68 aa)) adopt a coiled-coil conformation. A coiled-coil region spans residues 238–260 (RTRQRAEELLSELESSLPRMRDA). One copy of the TPR 6 repeat lies at 270–304 (LDDDFVLGLEEMTSTSFKSKRLPIFEQISSFRNTL).

This sequence belongs to the MS5 protein family.

It localises to the nucleus. Its function is as follows. Involved in the utilization of stored sulfate under sulfur-deficient conditions. This is Protein SULFUR DEFICIENCY-INDUCED 1 from Arabidopsis thaliana (Mouse-ear cress).